Consider the following 236-residue polypeptide: Ureidoacrylate amidohydrolase RutB (236 aa).

Aspartate 24 (proton acceptor) is an active-site residue. Residue lysine 133 is part of the active site. Cysteine 166 serves as the catalytic Nucleophile.

The protein belongs to the isochorismatase family. RutB subfamily.

It catalyses the reaction (Z)-3-ureidoacrylate + H2O + H(+) = (Z)-3-aminoacrylate + NH4(+) + CO2. It carries out the reaction (Z)-3-ureidoacrylate + H2O = (Z)-3-aminoacrylate + carbamate + H(+). The catalysed reaction is (Z)-2-methylureidoacrylate + H2O + H(+) = (Z)-2-methylaminoacrylate + NH4(+) + CO2. Hydrolyzes ureidoacrylate to form aminoacrylate and carbamate. The carbamate hydrolyzes spontaneously, thereby releasing one of the nitrogen atoms of the pyrimidine ring as ammonia and one of its carbon atoms as CO2. The polypeptide is Ureidoacrylate amidohydrolase RutB (Klebsiella pneumoniae (strain 342)).